A 364-amino-acid polypeptide reads, in one-letter code: Ribosomal RNA large subunit methyltransferase M (364 aa).

S-adenosyl-L-methionine is bound by residues Ser198, 231–234 (APGG), Asp250, Asp270, and Asp286. Lys315 (proton acceptor) is an active-site residue.

The protein belongs to the class I-like SAM-binding methyltransferase superfamily. RNA methyltransferase RlmE family. RlmM subfamily. In terms of assembly, monomer.

It is found in the cytoplasm. The catalysed reaction is cytidine(2498) in 23S rRNA + S-adenosyl-L-methionine = 2'-O-methylcytidine(2498) in 23S rRNA + S-adenosyl-L-homocysteine + H(+). Its function is as follows. Catalyzes the 2'-O-methylation at nucleotide C2498 in 23S rRNA. The sequence is that of Ribosomal RNA large subunit methyltransferase M from Azoarcus sp. (strain BH72).